The primary structure comprises 153 residues: Interleukin-2 (153 aa).

An N-terminal signal peptide occupies residues Met1–Ser20. O-linked (GalNAc...) threonine glycosylation is present at Thr23. A disulfide bond links Cys78 and Cys125.

The protein belongs to the IL-2 family.

The protein localises to the secreted. Functionally, cytokine produced by activated CD4-positive helper T-cells and to a lesser extend activated CD8-positive T-cells and natural killer (NK) cells that plays pivotal roles in the immune response and tolerance. Binds to a receptor complex composed of either the high-affinity trimeric IL-2R (IL2RA/CD25, IL2RB/CD122 and IL2RG/CD132) or the low-affinity dimeric IL-2R (IL2RB and IL2RG). Interaction with the receptor leads to oligomerization and conformation changes in the IL-2R subunits resulting in downstream signaling starting with phosphorylation of JAK1 and JAK3. In turn, JAK1 and JAK3 phosphorylate the receptor to form a docking site leading to the phosphorylation of several substrates including STAT5. This process leads to activation of several pathways including STAT, phosphoinositide-3-kinase/PI3K and mitogen-activated protein kinase/MAPK pathways. Functions as a T-cell growth factor and can increase NK-cell cytolytic activity as well. Promotes strong proliferation of activated B-cells and subsequently immunoglobulin production. Plays a pivotal role in regulating the adaptive immune system by controlling the survival and proliferation of regulatory T-cells, which are required for the maintenance of immune tolerance. Moreover, participates in the differentiation and homeostasis of effector T-cell subsets, including Th1, Th2, Th17 as well as memory CD8-positive T-cells. This is Interleukin-2 (IL2) from Homo sapiens (Human).